The following is a 267-amino-acid chain: MTLFHLILVAVIQGLTEFLPVSSSGHLILLPELSGMADQGQVIDVAVHVGTLFAVVLYFRADVAVAVAGVGRLIRGRIDTPGAFLALCLLIATVPVMVVGLALNLTGLDQALRSMAVIGWTMLIFGIVLYWADQRGPVTRKAGAWTLRHAAIMGLWQALALIPGTSRSGITITGARLLGYGREDAAKLSMLMSIPTILASGGLLGVEVAAQADWALLKDAAIGAVFAFGAALLALTLMMRLLRTVSFTPYVIYRVCLGTILLIIAYS.

A run of 7 helical transmembrane segments spans residues 1–21 (MTLF…FLPV), 49–69 (VGTL…AVAG), 83–103 (AFLA…GLAL), 111–131 (ALRS…VLYW), 190–210 (MLMS…EVAA), 219–239 (DAAI…TLMM), and 245–265 (VSFT…LIIA).

This sequence belongs to the UppP family.

The protein localises to the cell inner membrane. It carries out the reaction di-trans,octa-cis-undecaprenyl diphosphate + H2O = di-trans,octa-cis-undecaprenyl phosphate + phosphate + H(+). Catalyzes the dephosphorylation of undecaprenyl diphosphate (UPP). Confers resistance to bacitracin. The chain is Undecaprenyl-diphosphatase from Dinoroseobacter shibae (strain DSM 16493 / NCIMB 14021 / DFL 12).